A 424-amino-acid polypeptide reads, in one-letter code: uncharacterized protein (424 aa).

This sequence belongs to the serpin family.

This is an uncharacterized protein from Methanosarcina acetivorans (strain ATCC 35395 / DSM 2834 / JCM 12185 / C2A).